We begin with the raw amino-acid sequence, 358 residues long: Oligopeptide transport ATP-binding protein OppD (358 aa).

Residues 8–259 form the ABC transporter domain; the sequence is LEVKDLAISF…PRHPYTWGLL (252 aa). Position 44–51 (44–51) interacts with ATP; that stretch reads GESGSGKS.

Belongs to the ABC transporter superfamily. The complex is composed of two ATP-binding proteins (OppD and OppF), two transmembrane proteins (OppB and OppC) and a solute-binding protein (OppA).

Its subcellular location is the cell membrane. The enzyme catalyses a [peptide](out) + ATP + H2O = a [peptide](in) + ADP + phosphate + H(+). Its function is as follows. Part of the ABC transporter complex OppABCDF involved in the uptake of oligopeptides. Probably responsible for energy coupling to the transport system. Required for sporulation and genetic competence. In Bacillus subtilis (strain 168), this protein is Oligopeptide transport ATP-binding protein OppD.